Consider the following 348-residue polypeptide: Spermatogenesis-associated protein 32 (348 aa).

A compositionally biased stretch (basic and acidic residues) spans 27–36 (YHHHHHPLED). The disordered stretch occupies residues 27-61 (YHHHHHPLEDNKDEDNEMGTELSSMKPPPKVDPDP). Phosphoserine occurs at positions 149 and 152. Residues 308–329 (APATSPELQEDKDDSVPGTKKG) form a disordered region. A Phosphothreonine modification is found at threonine 330.

As to quaternary structure, interacts with syntaxin-1 and ACTB. Abundantly expressed in testes. Expressed in germ cells, but not in Sertoli or Leydig cells of the adult testis. Localized at the acrosomal region of the round and elongated spermatids at stages VIII-X.

The chain is Spermatogenesis-associated protein 32 (Spata32) from Rattus norvegicus (Rat).